We begin with the raw amino-acid sequence, 130 residues long: Bet1-like SNARE 1-2 (130 aa).

Residues 1-106 (MNFRRENRAS…EKKSNRKSCK (106 aa)) are Cytoplasmic-facing. One can recognise a t-SNARE coiled-coil homology domain in the interval 33-95 (AHDERDNDEA…SGTINRFKLV (63 aa)). Residues 40-82 (DEALENLQDRVSFLKRVTGDIHEEVENHNRLLDKVGNKMDSAR) adopt a coiled-coil conformation. A helical; Anchor for type IV membrane protein membrane pass occupies residues 107-122 (LIAYFVLLFLIMYYLI). At 123–130 (RLLNYIKG) the chain is on the vesicular side.

The protein belongs to the BET1 family.

The protein localises to the golgi apparatus membrane. Its subcellular location is the endoplasmic reticulum membrane. Required for vesicular transport from the ER to the Golgi complex. Functions as a SNARE associated with ER-derived vesicles. This Arabidopsis thaliana (Mouse-ear cress) protein is Bet1-like SNARE 1-2 (BET12).